Consider the following 324-residue polypeptide: Malate dehydrogenase (324 aa).

NAD(+) is bound by residues 7–13 (GAAGGIG) and aspartate 34. Arginine 88 and arginine 94 together coordinate substrate. Residues asparagine 101 and 124–126 (VTN) each bind NAD(+). 2 residues coordinate substrate: asparagine 126 and arginine 160. Residue histidine 184 is the Proton acceptor of the active site. Methionine 238 contacts NAD(+).

The protein belongs to the LDH/MDH superfamily. MDH type 1 family. As to quaternary structure, homodimer.

The enzyme catalyses (S)-malate + NAD(+) = oxaloacetate + NADH + H(+). Catalyzes the reversible oxidation of malate to oxaloacetate. The polypeptide is Malate dehydrogenase (Haemophilus ducreyi (strain 35000HP / ATCC 700724)).